The chain runs to 73 residues: Neurogranin (73 aa).

In terms of domain architecture, IQ spans A26–T55. Residue S36 is modified to Phosphoserine; by PKC. The span at K47–E59 shows a compositional bias: basic and acidic residues. A disordered region spans residues K47 to D73.

Belongs to the neurogranin family.

Acts as a 'third messenger' substrate of protein kinase C-mediated molecular cascades during synaptic development and remodeling. Binds to calmodulin in the absence of calcium. This is Neurogranin (NRGN) from Serinus canaria (Island canary).